The sequence spans 228 residues: UPF0502 protein AZOSEA09860 (228 aa).

It belongs to the UPF0502 family.

This chain is UPF0502 protein AZOSEA09860, found in Aromatoleum aromaticum (strain DSM 19018 / LMG 30748 / EbN1) (Azoarcus sp. (strain EbN1)).